Here is a 502-residue protein sequence, read N- to C-terminus: Keratin, type II cytoskeletal 8 (502 aa).

A head region spans residues 1-98; that stretch reads MSVRSTKVTY…DPSIQQVRTE (98 aa). 4 positions are modified to phosphoserine: serine 13, serine 26, serine 37, and serine 40. Positions 99 to 134 are coil 1A; it reads EKEQIKTLNNKFASFIDKVRFLEQQNKMLETKWNLL. Positions 99-410 constitute an IF rod domain; sequence EKEQIKTLNN…KLLEGEESRL (312 aa). The tract at residues 135 to 151 is linker 1; the sequence is QNQKTTRSNMDGMFEAY. The coil 1B stretch occupies residues 152 to 243; sequence ISNLRRQLDG…QLYEEELREM (92 aa). Residues 244-267 are linker 12; sequence QSQISDTSVVLSMDNNRSLDLDGI. Residues 268 to 406 form a coil 2 region; it reads IAEVRAQYED…ATYRKLLEGE (139 aa). The segment at 269-390 is necessary for interaction with PNN; sequence AEVRAQYEDV…DYQELMNVKL (122 aa). The tail stretch occupies residues 407-502; the sequence is ESRLESGFQN…SESSDVFSKP (96 aa). Phosphoserine is present on residues serine 425, serine 428, serine 436, and serine 444.

The protein belongs to the intermediate filament family. In terms of assembly, heterotetramer of two type I and two type II keratins. Keratin-8 associates with keratin-18. Expressed in oocytes, eggs, embryos, liver and intestinal mucosa.

The protein resides in the cytoplasm. It localises to the nucleus. The protein localises to the nucleoplasm. Its subcellular location is the nucleus matrix. Functionally, together with KRT19, helps to link the contractile apparatus to dystrophin at the costameres of striated muscle. In Xenopus laevis (African clawed frog), this protein is Keratin, type II cytoskeletal 8.